We begin with the raw amino-acid sequence, 366 residues long: Aminomethyltransferase (366 aa).

This sequence belongs to the GcvT family. In terms of assembly, the glycine cleavage system is composed of four proteins: P, T, L and H.

The catalysed reaction is N(6)-[(R)-S(8)-aminomethyldihydrolipoyl]-L-lysyl-[protein] + (6S)-5,6,7,8-tetrahydrofolate = N(6)-[(R)-dihydrolipoyl]-L-lysyl-[protein] + (6R)-5,10-methylene-5,6,7,8-tetrahydrofolate + NH4(+). The glycine cleavage system catalyzes the degradation of glycine. The sequence is that of Aminomethyltransferase from Bacillus cereus (strain ZK / E33L).